The primary structure comprises 330 residues: Ketol-acid reductoisomerase (NADP(+)) (330 aa).

One can recognise a KARI N-terminal Rossmann domain in the interval 1–181 (MNAYYEQDAD…GGTKAGVIET (181 aa)). NADP(+)-binding positions include 24 to 27 (YGSQ), Arg47, Ser50, Ser52, and 82 to 85 (DQYQ). Residue His107 is part of the active site. Gly133 serves as a coordination point for NADP(+). The KARI C-terminal knotted domain occupies 182-327 (TFKNETETDL…SKLRDMMSWL (146 aa)). Residues Asp190, Glu194, Glu226, and Glu230 each coordinate Mg(2+). Ser251 contacts substrate.

The protein belongs to the ketol-acid reductoisomerase family. Mg(2+) serves as cofactor.

The catalysed reaction is (2R)-2,3-dihydroxy-3-methylbutanoate + NADP(+) = (2S)-2-acetolactate + NADPH + H(+). The enzyme catalyses (2R,3R)-2,3-dihydroxy-3-methylpentanoate + NADP(+) = (S)-2-ethyl-2-hydroxy-3-oxobutanoate + NADPH + H(+). The protein operates within amino-acid biosynthesis; L-isoleucine biosynthesis; L-isoleucine from 2-oxobutanoate: step 2/4. It functions in the pathway amino-acid biosynthesis; L-valine biosynthesis; L-valine from pyruvate: step 2/4. Its function is as follows. Involved in the biosynthesis of branched-chain amino acids (BCAA). Catalyzes an alkyl-migration followed by a ketol-acid reduction of (S)-2-acetolactate (S2AL) to yield (R)-2,3-dihydroxy-isovalerate. In the isomerase reaction, S2AL is rearranged via a Mg-dependent methyl migration to produce 3-hydroxy-3-methyl-2-ketobutyrate (HMKB). In the reductase reaction, this 2-ketoacid undergoes a metal-dependent reduction by NADPH to yield (R)-2,3-dihydroxy-isovalerate. In Chlorobium limicola (strain DSM 245 / NBRC 103803 / 6330), this protein is Ketol-acid reductoisomerase (NADP(+)).